Reading from the N-terminus, the 458-residue chain is Phosphoglucosamine mutase (458 aa).

The active-site Phosphoserine intermediate is the serine 106. Serine 106, aspartate 247, aspartate 249, and aspartate 251 together coordinate Mg(2+). A Phosphoserine modification is found at serine 106.

This sequence belongs to the phosphohexose mutase family. Mg(2+) is required as a cofactor. In terms of processing, activated by phosphorylation.

The catalysed reaction is alpha-D-glucosamine 1-phosphate = D-glucosamine 6-phosphate. Catalyzes the conversion of glucosamine-6-phosphate to glucosamine-1-phosphate. This chain is Phosphoglucosamine mutase, found in Chlamydia trachomatis serovar D (strain ATCC VR-885 / DSM 19411 / UW-3/Cx).